The primary structure comprises 528 residues: MSTVNVQIGLHELLNGSNAQIQLSVPQLVEKVLMRNEGKLTSTGAVSASTGKYTGRSPKDKFIVKEASVADKIAWGAVNQPISEEHFNKLYTKVLEYLKEKEELFVFKGFAGADRNYRLPIQVINEYAWHNLFVHQLFIRPTEEELTTHESGFTIVSAPNFKADPAVDGTNSEAFIMVSFEKRIVLIGGTEYAGEMKKSIFSIMNFLLPEQDILSMHCSANVGEEGDVALFFGLSGTGKTTLSADPNRKLIGDDEHGWSDNGVFNIEGGCYAKCVNLSHEKEPQIFDAITFGSVLENVIINDQTRIADYNDTTLTENTRAAYPMHAIDNIVLPSVAGHPNTIIFLTADASGVLPPISKLSKEQAMYHFLSGYTSKLAGTERGVTSPQATFSTCFGSPFLPLDASRYAEMLGEKIEKHDAKVFLVNTGWTGGEYGVGKRMNLGYTRAMIQAALNGELAKTETAKHDIFGLEVPLHVPGVPDEVLMPEQTWADKAAYKAKAIELANEFKANFKKFDSVSEDIINLGGPIA.

The substrate site is built by arginine 56, tyrosine 192, and lysine 198. Residues lysine 198, histidine 217, and 233-241 (GLSGTGKTT) each bind ATP. Mn(2+) contacts are provided by lysine 198 and histidine 217. Residue aspartate 254 coordinates Mn(2+). ATP is bound by residues glutamate 282, arginine 319, and threonine 444. Arginine 319 contributes to the substrate binding site.

This sequence belongs to the phosphoenolpyruvate carboxykinase (ATP) family. Mn(2+) serves as cofactor.

It localises to the cytoplasm. The catalysed reaction is oxaloacetate + ATP = phosphoenolpyruvate + ADP + CO2. It functions in the pathway carbohydrate biosynthesis; gluconeogenesis. Involved in the gluconeogenesis. Catalyzes the conversion of oxaloacetate (OAA) to phosphoenolpyruvate (PEP) through direct phosphoryl transfer between the nucleoside triphosphate and OAA. In Bacillus cereus (strain B4264), this protein is Phosphoenolpyruvate carboxykinase (ATP).